The chain runs to 150 residues: Large ribosomal subunit protein bL9 (150 aa).

It belongs to the bacterial ribosomal protein bL9 family.

Its function is as follows. Binds to the 23S rRNA. The sequence is that of Large ribosomal subunit protein bL9 from Sodalis glossinidius (strain morsitans).